The primary structure comprises 55 residues: U2-theraphotoxin-Cg1a (55 aa).

A propeptide spanning residues 1–19 (DSPAWLKSMERIFQSEERE) is cleaved from the precursor. Intrachain disulfides connect C20–C34, C27–C39, and C33–C47.

The protein belongs to the neurotoxin 10 (Hwtx-1) family. 06 (F4b) subfamily. Expressed by the venom gland.

It is found in the secreted. Functionally, probable ion channel inhibitor. The protein is U2-theraphotoxin-Cg1a of Chilobrachys guangxiensis (Chinese earth tiger tarantula).